Reading from the N-terminus, the 579-residue chain is Protein downstream neighbor of son homolog (579 aa).

Disordered regions lie at residues 1–68 (MAEL…RRNP) and 331–379 (FSQP…DESF). The segment covering 339–348 (DTGKKQKKPE) has biased composition (basic and acidic residues). Acidic residues predominate over residues 365–378 (EADEASDESDEDES).

The protein belongs to the DONSON family. As to quaternary structure, component of the replisome complex.

The protein localises to the nucleus. Its function is as follows. Replisome component that maintains genome stability by protecting stalled or damaged replication forks. After the induction of replication stress, required for the stabilization of stalled replication forks, the efficient activation of the intra-S-phase and G/2M cell-cycle checkpoints and the maintenance of genome stability. This Xenopus laevis (African clawed frog) protein is Protein downstream neighbor of son homolog.